Reading from the N-terminus, the 353-residue chain is Chorismate synthase (353 aa).

2 residues coordinate NADP(+): Arg48 and Arg54. FMN-binding positions include 125–127, 238–239, Gly278, 293–297, and Arg319; these read RSS, NA, and KPTSS.

The protein belongs to the chorismate synthase family. As to quaternary structure, homotetramer. FMNH2 is required as a cofactor.

The enzyme catalyses 5-O-(1-carboxyvinyl)-3-phosphoshikimate = chorismate + phosphate. The protein operates within metabolic intermediate biosynthesis; chorismate biosynthesis; chorismate from D-erythrose 4-phosphate and phosphoenolpyruvate: step 7/7. Functionally, catalyzes the anti-1,4-elimination of the C-3 phosphate and the C-6 proR hydrogen from 5-enolpyruvylshikimate-3-phosphate (EPSP) to yield chorismate, which is the branch point compound that serves as the starting substrate for the three terminal pathways of aromatic amino acid biosynthesis. This reaction introduces a second double bond into the aromatic ring system. The protein is Chorismate synthase of Buchnera aphidicola subsp. Schizaphis graminum (strain Sg).